The sequence spans 264 residues: Thymidylate synthase (264 aa).

Arg21 contacts dUMP. Residue His51 coordinates (6R)-5,10-methylene-5,6,7,8-tetrahydrofolate. The active-site Nucleophile is the Cys146. DUMP contacts are provided by residues 166–169, Asn177, and 207–209; these read RSAD and HIY. Residue Asp169 participates in (6R)-5,10-methylene-5,6,7,8-tetrahydrofolate binding. Residue Ala263 participates in (6R)-5,10-methylene-5,6,7,8-tetrahydrofolate binding.

The protein belongs to the thymidylate synthase family. Bacterial-type ThyA subfamily. Homodimer.

The protein resides in the cytoplasm. It catalyses the reaction dUMP + (6R)-5,10-methylene-5,6,7,8-tetrahydrofolate = 7,8-dihydrofolate + dTMP. Its pathway is pyrimidine metabolism; dTTP biosynthesis. Its function is as follows. Catalyzes the reductive methylation of 2'-deoxyuridine-5'-monophosphate (dUMP) to 2'-deoxythymidine-5'-monophosphate (dTMP) while utilizing 5,10-methylenetetrahydrofolate (mTHF) as the methyl donor and reductant in the reaction, yielding dihydrofolate (DHF) as a by-product. This enzymatic reaction provides an intracellular de novo source of dTMP, an essential precursor for DNA biosynthesis. In Brucella canis (strain ATCC 23365 / NCTC 10854 / RM-666), this protein is Thymidylate synthase.